The primary structure comprises 246 residues: 3-deoxy-manno-octulosonate cytidylyltransferase (246 aa).

Belongs to the KdsB family.

It localises to the cytoplasm. The catalysed reaction is 3-deoxy-alpha-D-manno-oct-2-ulosonate + CTP = CMP-3-deoxy-beta-D-manno-octulosonate + diphosphate. The protein operates within nucleotide-sugar biosynthesis; CMP-3-deoxy-D-manno-octulosonate biosynthesis; CMP-3-deoxy-D-manno-octulosonate from 3-deoxy-D-manno-octulosonate and CTP: step 1/1. It participates in bacterial outer membrane biogenesis; lipopolysaccharide biosynthesis. Activates KDO (a required 8-carbon sugar) for incorporation into bacterial lipopolysaccharide in Gram-negative bacteria. This is 3-deoxy-manno-octulosonate cytidylyltransferase from Rickettsia massiliae (strain Mtu5).